A 600-amino-acid chain; its full sequence is Proline--tRNA ligase (600 aa).

It belongs to the class-II aminoacyl-tRNA synthetase family. ProS type 1 subfamily. As to quaternary structure, homodimer.

It localises to the cytoplasm. The catalysed reaction is tRNA(Pro) + L-proline + ATP = L-prolyl-tRNA(Pro) + AMP + diphosphate. Functionally, catalyzes the attachment of proline to tRNA(Pro) in a two-step reaction: proline is first activated by ATP to form Pro-AMP and then transferred to the acceptor end of tRNA(Pro). As ProRS can inadvertently accommodate and process non-cognate amino acids such as alanine and cysteine, to avoid such errors it has two additional distinct editing activities against alanine. One activity is designated as 'pretransfer' editing and involves the tRNA(Pro)-independent hydrolysis of activated Ala-AMP. The other activity is designated 'posttransfer' editing and involves deacylation of mischarged Ala-tRNA(Pro). The misacylated Cys-tRNA(Pro) is not edited by ProRS. The sequence is that of Proline--tRNA ligase from Prochlorococcus marinus (strain MIT 9301).